Consider the following 329-residue polypeptide: Phosphate acyltransferase (329 aa).

Belongs to the PlsX family. As to quaternary structure, homodimer. Probably interacts with PlsY.

It localises to the cytoplasm. The enzyme catalyses a fatty acyl-[ACP] + phosphate = an acyl phosphate + holo-[ACP]. Its pathway is lipid metabolism; phospholipid metabolism. In terms of biological role, catalyzes the reversible formation of acyl-phosphate (acyl-PO(4)) from acyl-[acyl-carrier-protein] (acyl-ACP). This enzyme utilizes acyl-ACP as fatty acyl donor, but not acyl-CoA. The sequence is that of Phosphate acyltransferase from Sulfurovum sp. (strain NBC37-1).